A 55-amino-acid chain; its full sequence is Large ribosomal subunit protein bL33 (55 aa).

The span at 1–11 shows a compositional bias: basic and acidic residues; that stretch reads MAKGGREKIKL. Residues 1–27 form a disordered region; it reads MAKGGREKIKLESTAGTGHFYTTSKNK. Over residues 14-24 the composition is skewed to polar residues; sequence TAGTGHFYTTS.

Belongs to the bacterial ribosomal protein bL33 family.

The chain is Large ribosomal subunit protein bL33 from Dechloromonas aromatica (strain RCB).